The chain runs to 610 residues: UvrABC system protein C (610 aa).

Residues 16-94 enclose the GIY-YIG domain; that stretch reads SQPGVYRMYD…IKLYQPRYNV (79 aa). The UVR domain maps to 204–239; the sequence is DQVLTQLIARMEKASQDLAFEEAARIRDQIQAVRRV.

The protein belongs to the UvrC family. In terms of assembly, interacts with UvrB in an incision complex.

The protein localises to the cytoplasm. In terms of biological role, the UvrABC repair system catalyzes the recognition and processing of DNA lesions. UvrC both incises the 5' and 3' sides of the lesion. The N-terminal half is responsible for the 3' incision and the C-terminal half is responsible for the 5' incision. The chain is UvrABC system protein C from Salmonella heidelberg (strain SL476).